The chain runs to 364 residues: Methylthioribose-1-phosphate isomerase (364 aa).

Asp254 functions as the Proton donor in the catalytic mechanism.

The protein belongs to the eIF-2B alpha/beta/delta subunits family. MtnA subfamily.

The protein resides in the cytoplasm. It is found in the nucleus. It catalyses the reaction 5-(methylsulfanyl)-alpha-D-ribose 1-phosphate = 5-(methylsulfanyl)-D-ribulose 1-phosphate. It participates in amino-acid biosynthesis; L-methionine biosynthesis via salvage pathway; L-methionine from S-methyl-5-thio-alpha-D-ribose 1-phosphate: step 1/6. Functionally, catalyzes the interconversion of methylthioribose-1-phosphate (MTR-1-P) into methylthioribulose-1-phosphate (MTRu-1-P). The polypeptide is Methylthioribose-1-phosphate isomerase (Drosophila melanogaster (Fruit fly)).